The primary structure comprises 156 residues: Small ribosomal subunit protein uS7 (156 aa).

It belongs to the universal ribosomal protein uS7 family. As to quaternary structure, part of the 30S ribosomal subunit. Contacts proteins S9 and S11.

One of the primary rRNA binding proteins, it binds directly to 16S rRNA where it nucleates assembly of the head domain of the 30S subunit. Is located at the subunit interface close to the decoding center, probably blocks exit of the E-site tRNA. This Arthrospira platensis (Spirulina platensis) protein is Small ribosomal subunit protein uS7.